The primary structure comprises 285 residues: Bifunctional protein FolD (285 aa).

NADP(+) contacts are provided by residues 163–165, Ser-188, and Ala-231; that span reads GRS.

Belongs to the tetrahydrofolate dehydrogenase/cyclohydrolase family. Homodimer.

The enzyme catalyses (6R)-5,10-methylene-5,6,7,8-tetrahydrofolate + NADP(+) = (6R)-5,10-methenyltetrahydrofolate + NADPH. It catalyses the reaction (6R)-5,10-methenyltetrahydrofolate + H2O = (6R)-10-formyltetrahydrofolate + H(+). It functions in the pathway one-carbon metabolism; tetrahydrofolate interconversion. In terms of biological role, catalyzes the oxidation of 5,10-methylenetetrahydrofolate to 5,10-methenyltetrahydrofolate and then the hydrolysis of 5,10-methenyltetrahydrofolate to 10-formyltetrahydrofolate. The chain is Bifunctional protein FolD from Oenococcus oeni (strain ATCC BAA-331 / PSU-1).